We begin with the raw amino-acid sequence, 164 residues long: Phosphopantetheine adenylyltransferase (164 aa).

S9 provides a ligand contact to substrate. Residues 9 to 10 (SF) and H17 contribute to the ATP site. Substrate contacts are provided by K41, L73, and R87. ATP is bound by residues E98 and 122–128 (YSFLSSS).

It belongs to the bacterial CoaD family. As to quaternary structure, homohexamer. Mg(2+) is required as a cofactor.

It is found in the cytoplasm. It carries out the reaction (R)-4'-phosphopantetheine + ATP + H(+) = 3'-dephospho-CoA + diphosphate. Its pathway is cofactor biosynthesis; coenzyme A biosynthesis; CoA from (R)-pantothenate: step 4/5. Functionally, reversibly transfers an adenylyl group from ATP to 4'-phosphopantetheine, yielding dephospho-CoA (dPCoA) and pyrophosphate. The polypeptide is Phosphopantetheine adenylyltransferase (Thermobifida fusca (strain YX)).